A 362-amino-acid polypeptide reads, in one-letter code: Adenosine deaminase (362 aa).

2 residues coordinate Zn(2+): His19 and His21. 3 residues coordinate substrate: His21, Asp23, and Gly181. His208 contributes to the Zn(2+) binding site. Residue Glu211 is the Proton donor of the active site. Asp300 contacts Zn(2+).

It belongs to the metallo-dependent hydrolases superfamily. Adenosine and AMP deaminases family. Adenosine deaminase subfamily. Zn(2+) is required as a cofactor.

It catalyses the reaction adenosine + H2O + H(+) = inosine + NH4(+). The enzyme catalyses 2'-deoxyadenosine + H2O + H(+) = 2'-deoxyinosine + NH4(+). Its function is as follows. Catalyzes the hydrolytic deamination of adenosine and 2-deoxyadenosine. The polypeptide is Adenosine deaminase (Mycobacterium sp. (strain MCS)).